Reading from the N-terminus, the 2784-residue chain is Cilia- and flagella-associated protein 46 (2784 aa).

One copy of the TPR 1 repeat lies at G129–G162. Positions T242–A268 form a coiled coil. A TPR 2 repeat occupies S401–H434. Disordered regions lie at residues S543–E562 and R581–R607. Pro residues predominate over residues H585 to P595. The stretch at A644–I665 forms a coiled coil. A disordered region spans residues R670 to T697. The TPR 3 repeat unit spans residues A708–H743. Disordered regions lie at residues D799–K837 and R929–G954. Acidic residues predominate over residues Q802 to G817. The TPR 4 repeat unit spans residues L976 to A1009. Residues T1275–D1288 are compositionally biased toward acidic residues. Disordered regions lie at residues T1275–E1351 and A1640–L1673. Positions S1298–F1311 are enriched in gly residues. Residues G1646–I1658 show a composition bias toward basic and acidic residues. TPR repeat units follow at residues H1712–C1745 and M1854–R1886. A coiled-coil region spans residues R1961 to A1984. Disordered regions lie at residues R2068–A2112, A2278–A2303, A2346–A2389, and L2441–T2465. Residues P2069 to P2083 show a composition bias toward pro residues. Positions A2087 to P2096 are enriched in acidic residues. Residues D2097–A2112 are compositionally biased toward low complexity. The segment covering S2378–A2389 has biased composition (low complexity). Positions D2450–A2461 are enriched in basic and acidic residues. One copy of the TPR 7 repeat lies at A2613 to C2646.

This sequence belongs to the CFAP46 family. Part of the PDCP1 complex composed of CFAP46, CFAP54, CFAP74 and CFAP221; the PDCP1 complex binds calmodulin.

It localises to the cytoplasm. It is found in the cytoskeleton. The protein localises to the cilium axoneme. Its function is as follows. As part of the central apparatus of the cilium axoneme plays a role in cilium movement and thereby cell motility. This Chlamydomonas reinhardtii (Chlamydomonas smithii) protein is Cilia- and flagella-associated protein 46.